The following is a 389-amino-acid chain: Succinate--CoA ligase [ADP-forming] subunit beta (389 aa).

Residues R9 to K236 enclose the ATP-grasp domain. ATP contacts are provided by residues K45, G52 to G54, A94, and E99. The Mg(2+) site is built by N191 and D205. Substrate-binding positions include N256 and G318–T320.

Belongs to the succinate/malate CoA ligase beta subunit family. In terms of assembly, heterotetramer of two alpha and two beta subunits. It depends on Mg(2+) as a cofactor.

It catalyses the reaction succinate + ATP + CoA = succinyl-CoA + ADP + phosphate. It carries out the reaction GTP + succinate + CoA = succinyl-CoA + GDP + phosphate. Its pathway is carbohydrate metabolism; tricarboxylic acid cycle; succinate from succinyl-CoA (ligase route): step 1/1. Its function is as follows. Succinyl-CoA synthetase functions in the citric acid cycle (TCA), coupling the hydrolysis of succinyl-CoA to the synthesis of either ATP or GTP and thus represents the only step of substrate-level phosphorylation in the TCA. The beta subunit provides nucleotide specificity of the enzyme and binds the substrate succinate, while the binding sites for coenzyme A and phosphate are found in the alpha subunit. This is Succinate--CoA ligase [ADP-forming] subunit beta from Arthrobacter sp. (strain FB24).